The primary structure comprises 144 residues: uncharacterized protein (144 aa).

Residues 72–90 traverse the membrane as a helical segment; the sequence is VAIGTSLIVGAGVAMEVSV.

It to yeast YCL21w.

Its subcellular location is the membrane. This is an uncharacterized protein from Saccharomyces cerevisiae (strain ATCC 204508 / S288c) (Baker's yeast).